We begin with the raw amino-acid sequence, 179 residues long: Large ribosomal subunit protein uL6 (179 aa).

It belongs to the universal ribosomal protein uL6 family. As to quaternary structure, part of the 50S ribosomal subunit.

In terms of biological role, this protein binds to the 23S rRNA, and is important in its secondary structure. It is located near the subunit interface in the base of the L7/L12 stalk, and near the tRNA binding site of the peptidyltransferase center. This chain is Large ribosomal subunit protein uL6, found in Geotalea daltonii (strain DSM 22248 / JCM 15807 / FRC-32) (Geobacter daltonii).